The sequence spans 118 residues: DNA-binding protein Msm_0708 (118 aa).

Residues 16–39 (EARQAAAQGQMQQQAQQQMQQQEA) are disordered. The span at 18-39 (RQAAAQGQMQQQAQQQMQQQEA) shows a compositional bias: low complexity.

The protein belongs to the PDCD5 family.

The polypeptide is DNA-binding protein Msm_0708 (Methanobrevibacter smithii (strain ATCC 35061 / DSM 861 / OCM 144 / PS)).